A 243-amino-acid polypeptide reads, in one-letter code: ABC transporter arginine-binding protein 1 (243 aa).

The N-terminal stretch at methionine 1–alanine 19 is a signal peptide.

This sequence belongs to the bacterial solute-binding protein 3 family. As to quaternary structure, the complex is composed of two ATP-binding proteins (ArtP), two transmembrane proteins (ArtM and ArtQ) and two solute-binding proteins (ArtJ and ArtI).

It localises to the periplasm. Functionally, part of the ABC transporter complex ArtPIQMJ involved in arginine transport. Binds L-arginine with high affinity. The chain is ABC transporter arginine-binding protein 1 (artJ) from Escherichia coli (strain K12).